The chain runs to 575 residues: Transcription factor E3 (575 aa).

Serine 47 carries the post-translational modification Phosphoserine; by MTOR. Residues 90-126 (ATLSASSSAGGSRTPAMSSSSSSRVLLRQQLMRAQAQ) show a composition bias toward low complexity. Positions 90–153 (ATLSASSSAG…SPAPASPAIS (64 aa)) are disordered. Over residues 127–136 (EQERRERREQ) the composition is skewed to basic and acidic residues. Asymmetric dimethylarginine is present on arginine 188. The tract at residues 211-246 (LASQALTPPPGPASAQPLPAPEAAHTTGPTGSAPNS) is disordered. The strong transcription activation domain stretch occupies residues 260–271 (EIDDVIDEIISL). The residue at position 321 (serine 321) is a Phosphoserine; by MTOR. Residue lysine 339 forms a Glycyl lysine isopeptide (Lys-Gly) (interchain with G-Cter in SUMO2) linkage. Positions 346-399 (QKKDNHNLIERRRRFNINDRIKELGTLIPKSSDPEMRWNKGTILKASVDYIRKL) constitute a bHLH domain. A Nuclear localization signal motif is present at residues 356–359 (RRRR). The interval 409 to 430 (LESRQRSLEQANRSLQLRIQEL) is leucine-zipper. Disordered stretches follow at residues 473–498 (GAAT…PPSD) and 534–575 (GGLS…EEES). A compositionally biased stretch (low complexity) spans 539–575 (GALSPLRAASDPLLSSVSPAVSKASSRRSSFSMEEES). Phosphoserine occurs at positions 542, 548, 554, 556, 560, and 568.

It belongs to the MiT/TFE family. In terms of assembly, homodimer and heterodimer; with TFEB or MITF. Interacts with RRAGC/RagC GDP-bound and RRAGD/RagD GDP-bound; promoting its recruitment to lysosomal membrane in the presence of nutrients. Interacts with TSC22D1; the interaction is enhanced in the presence of TGF-beta. Post-translationally, sumoylated; does not affect dimerization with MITF. In terms of processing, phosphorylation ar Ser-47 and Ser-321 by MTOR via non-canonical mTORC1 pathway regulates its stability and subcellular location, respectively. When nutrients are present, phosphorylation by MTOR at Ser-47 promotes ubiquitination by the SCF(BTRC) complex, followed by degradation. When nutrients are present, phosphorylation by MTOR at Ser-321 also promotes association with 14-3-3/YWHA adapters and retention in the cytosol. Phosphorylation at Ser-47 plays a more critical role than phosphorylation at Ser-321 for TFE3 inactivation. Inhibition of mTORC1, starvation and lysosomal disruption, promotes dephosphorylation and transcription factor activity. Ubiquitinated by the SCF(BTRC) and SCF(FBXW11) complexes following phosphorylation at Ser-47 by MTOR, leading to its degradation by the proteasome. Ubiquitous in fetal and adult tissues.

It is found in the cytoplasm. The protein resides in the cytosol. The protein localises to the nucleus. Its subcellular location is the lysosome membrane. In terms of biological role, transcription factor that acts as a master regulator of lysosomal biogenesis and immune response. Specifically recognizes and binds E-box sequences (5'-CANNTG-3'); efficient DNA-binding requires dimerization with itself or with another MiT/TFE family member such as TFEB or MITF. Involved in the cellular response to amino acid availability by acting downstream of MTOR: in the presence of nutrients, TFE3 phosphorylation by MTOR promotes its inactivation. Upon starvation or lysosomal stress, inhibition of MTOR induces TFE3 dephosphorylation, resulting in transcription factor activity. Specifically recognizes and binds the CLEAR-box sequence (5'-GTCACGTGAC-3') present in the regulatory region of many lysosomal genes, leading to activate their expression, thereby playing a central role in expression of lysosomal genes. Maintains the pluripotent state of embryonic stem cells by promoting the expression of genes such as ESRRB; mTOR-dependent TFE3 cytosolic retention and inactivation promotes exit from pluripotency. Required to maintain the naive pluripotent state of hematopoietic stem cell; mTOR-dependent cytoplasmic retention of TFE3 promotes the exit of hematopoietic stem cell from pluripotency. TFE3 activity is also involved in the inhibition of neuronal progenitor differentiation. Acts as a positive regulator of browning of adipose tissue by promoting expression of target genes; mTOR-dependent phosphorylation promotes cytoplasmic retention of TFE3 and inhibits browning of adipose tissue. In association with TFEB, activates the expression of CD40L in T-cells, thereby playing a role in T-cell-dependent antibody responses in activated CD4(+) T-cells and thymus-dependent humoral immunity. Specifically recognizes the MUE3 box, a subset of E-boxes, present in the immunoglobulin enhancer. It also binds very well to a USF/MLTF site. Promotes TGF-beta-induced transcription of COL1A2; via its interaction with TSC22D1 at E-boxes in the gene proximal promoter. May regulate lysosomal positioning in response to nutrient deprivation by promoting the expression of PIP4P1. The sequence is that of Transcription factor E3 from Homo sapiens (Human).